The chain runs to 188 residues: Molybdopterin synthase catalytic subunit (188 aa).

Over residues 1–14 (MATQPPQDQTSTTP) the composition is skewed to low complexity. A disordered region spans residues 1–23 (MATQPPQDQTSTTPSLPPHLDPT). Substrate is bound by residues 134–135 (HR), K150, and 157–159 (KRE).

The protein belongs to the MoaE family. MOCS2B subfamily. Heterotetramer; composed of 2 small (MOCS2A) and 2 large (MOCS2B) subunits.

The protein localises to the cytoplasm. The catalysed reaction is 2 [molybdopterin-synthase sulfur-carrier protein]-C-terminal-Gly-aminoethanethioate + cyclic pyranopterin phosphate + H2O = molybdopterin + 2 [molybdopterin-synthase sulfur-carrier protein]-C-terminal Gly-Gly + 2 H(+). It participates in cofactor biosynthesis; molybdopterin biosynthesis. Catalytic subunit of the molybdopterin synthase complex, a complex that catalyzes the conversion of precursor Z into molybdopterin. Acts by mediating the incorporation of 2 sulfur atoms from thiocarboxylated MOCS2A into precursor Z to generate a dithiolene group. This Aspergillus fumigatus (strain ATCC MYA-4609 / CBS 101355 / FGSC A1100 / Af293) (Neosartorya fumigata) protein is Molybdopterin synthase catalytic subunit.